Reading from the N-terminus, the 76-residue chain is Acyl carrier protein (76 aa).

The Carrier domain maps to 1–74; sequence MFDKLKEIIA…DVVEYITEHT (74 aa). An O-(pantetheine 4'-phosphoryl)serine modification is found at serine 34.

Belongs to the acyl carrier protein (ACP) family. In terms of processing, 4'-phosphopantetheine is transferred from CoA to a specific serine of apo-ACP by AcpS. This modification is essential for activity because fatty acids are bound in thioester linkage to the sulfhydryl of the prosthetic group.

The protein localises to the cytoplasm. It participates in lipid metabolism; fatty acid biosynthesis. Carrier of the growing fatty acid chain in fatty acid biosynthesis. This Clostridium perfringens (strain ATCC 13124 / DSM 756 / JCM 1290 / NCIMB 6125 / NCTC 8237 / Type A) protein is Acyl carrier protein.